Here is an 876-residue protein sequence, read N- to C-terminus: Alanine--tRNA ligase (876 aa).

Zn(2+) is bound by residues His564, His568, Cys666, and His670.

It belongs to the class-II aminoacyl-tRNA synthetase family. Zn(2+) serves as cofactor.

It is found in the cytoplasm. The catalysed reaction is tRNA(Ala) + L-alanine + ATP = L-alanyl-tRNA(Ala) + AMP + diphosphate. Functionally, catalyzes the attachment of alanine to tRNA(Ala) in a two-step reaction: alanine is first activated by ATP to form Ala-AMP and then transferred to the acceptor end of tRNA(Ala). Also edits incorrectly charged Ser-tRNA(Ala) and Gly-tRNA(Ala) via its editing domain. This is Alanine--tRNA ligase from Colwellia psychrerythraea (strain 34H / ATCC BAA-681) (Vibrio psychroerythus).